Reading from the N-terminus, the 511-residue chain is Probable mannosyl-oligosaccharide alpha-1,2-mannosidase 1B (511 aa).

Residues 1–18 (MHLPSLSLAWALAGSSLA) form the signal peptide. N-linked (GlcNAc...) asparagine glycosylation is found at asparagine 90 and asparagine 177. A disulfide bridge connects residues cysteine 327 and cysteine 356. The active-site Proton donor is the glutamate 370. Asparagine 433 carries an N-linked (GlcNAc...) asparagine glycan. Threonine 501 lines the Ca(2+) pocket.

The protein belongs to the glycosyl hydrolase 47 family. As to quaternary structure, monomer. Requires Ca(2+) as cofactor. Mg(2+) serves as cofactor.

It localises to the cytoplasmic vesicle lumen. The enzyme catalyses N(4)-(alpha-D-Man-(1-&gt;2)-alpha-D-Man-(1-&gt;2)-alpha-D-Man-(1-&gt;3)-[alpha-D-Man-(1-&gt;2)-alpha-D-Man-(1-&gt;3)-[alpha-D-Man-(1-&gt;2)-alpha-D-Man-(1-&gt;6)]-alpha-D-Man-(1-&gt;6)]-beta-D-Man-(1-&gt;4)-beta-D-GlcNAc-(1-&gt;4)-beta-D-GlcNAc)-L-asparaginyl-[protein] (N-glucan mannose isomer 9A1,2,3B1,2,3) + 4 H2O = N(4)-(alpha-D-Man-(1-&gt;3)-[alpha-D-Man-(1-&gt;3)-[alpha-D-Man-(1-&gt;6)]-alpha-D-Man-(1-&gt;6)]-beta-D-Man-(1-&gt;4)-beta-D-GlcNAc-(1-&gt;4)-beta-D-GlcNAc)-L-asparaginyl-[protein] (N-glucan mannose isomer 5A1,2) + 4 beta-D-mannose. It carries out the reaction N(4)-(alpha-D-Man-(1-&gt;2)-alpha-D-Man-(1-&gt;2)-alpha-D-Man-(1-&gt;3)-[alpha-D-Man-(1-&gt;3)-[alpha-D-Man-(1-&gt;2)-alpha-D-Man-(1-&gt;6)]-alpha-D-Man-(1-&gt;6)]-beta-D-Man-(1-&gt;4)-beta-D-GlcNAc-(1-&gt;4)-beta-D-GlcNAc)-L-asparaginyl-[protein] (N-glucan mannose isomer 8A1,2,3B1,3) + 3 H2O = N(4)-(alpha-D-Man-(1-&gt;3)-[alpha-D-Man-(1-&gt;3)-[alpha-D-Man-(1-&gt;6)]-alpha-D-Man-(1-&gt;6)]-beta-D-Man-(1-&gt;4)-beta-D-GlcNAc-(1-&gt;4)-beta-D-GlcNAc)-L-asparaginyl-[protein] (N-glucan mannose isomer 5A1,2) + 3 beta-D-mannose. Its pathway is protein modification; protein glycosylation. In terms of biological role, involved in the maturation of Asn-linked oligosaccharides. Progressively trims alpha-1,2-linked mannose residues from Man(9)GlcNAc(2) to produce Man(5)GlcNAc(2). The protein is Probable mannosyl-oligosaccharide alpha-1,2-mannosidase 1B (mns1B) of Aspergillus clavatus (strain ATCC 1007 / CBS 513.65 / DSM 816 / NCTC 3887 / NRRL 1 / QM 1276 / 107).